The chain runs to 128 residues: Ig kappa chain V-V region T1 (128 aa).

Positions 1 to 20 (MRTPAQFLGILLLWFPGIKC) are cleaved as a signal peptide. Residues 21–43 (DIKMTQSPSSMYASLGERVTISC) form a framework-1 region. C43 and C108 are oxidised to a cystine. The tract at residues 44-54 (KASQDINSYLT) is complementarity-determining-1. Positions 55–69 (WFQQKPGKSPKTLLY) are framework-2. Residues 70–76 (RANRLVD) form a complementarity-determining-2 region. A framework-3 region spans residues 77-108 (GVPSRFSGSGSGQDFSLTISSLEYEDMGIYYC). The interval 109–117 (LQYDEFPLT) is complementarity-determining-3. The interval 118-127 (FGAGTKLELK) is framework-4.

The polypeptide is Ig kappa chain V-V region T1 (Mus musculus (Mouse)).